Consider the following 299-residue polypeptide: Phosphoribosylaminoimidazole-succinocarboxamide synthase (299 aa).

This sequence belongs to the SAICAR synthetase family.

It catalyses the reaction 5-amino-1-(5-phospho-D-ribosyl)imidazole-4-carboxylate + L-aspartate + ATP = (2S)-2-[5-amino-1-(5-phospho-beta-D-ribosyl)imidazole-4-carboxamido]succinate + ADP + phosphate + 2 H(+). Its pathway is purine metabolism; IMP biosynthesis via de novo pathway; 5-amino-1-(5-phospho-D-ribosyl)imidazole-4-carboxamide from 5-amino-1-(5-phospho-D-ribosyl)imidazole-4-carboxylate: step 1/2. This is Phosphoribosylaminoimidazole-succinocarboxamide synthase from Desulfatibacillum aliphaticivorans.